We begin with the raw amino-acid sequence, 166 residues long: Flagellar assembly factor FliW (166 aa).

It belongs to the FliW family. Interacts with translational regulator CsrA and flagellin(s).

It is found in the cytoplasm. Acts as an anti-CsrA protein, binds CsrA and prevents it from repressing translation of its target genes, one of which is flagellin. Binds to flagellin and participates in the assembly of the flagellum. In Desulfovibrio desulfuricans (strain ATCC 27774 / DSM 6949 / MB), this protein is Flagellar assembly factor FliW.